The chain runs to 368 residues: tRNA(Met) cytidine acetate ligase (368 aa).

ATP is bound by residues 7 to 20 (IAEF…HKYL), glycine 96, asparagine 152, and arginine 175.

This sequence belongs to the TmcAL family.

It is found in the cytoplasm. The catalysed reaction is cytidine(34) in elongator tRNA(Met) + acetate + ATP = N(4)-acetylcytidine(34) in elongator tRNA(Met) + AMP + diphosphate. Its function is as follows. Catalyzes the formation of N(4)-acetylcytidine (ac(4)C) at the wobble position of elongator tRNA(Met), using acetate and ATP as substrates. First activates an acetate ion to form acetyladenylate (Ac-AMP) and then transfers the acetyl group to tRNA to form ac(4)C34. The sequence is that of tRNA(Met) cytidine acetate ligase from Streptococcus pyogenes serotype M4 (strain MGAS10750).